A 416-amino-acid polypeptide reads, in one-letter code: Serine hydroxymethyltransferase (416 aa).

Residues Leu118 and 122–124 contribute to the (6S)-5,6,7,8-tetrahydrofolate site; that span reads GHL. Residue Lys226 is modified to N6-(pyridoxal phosphate)lysine. (6S)-5,6,7,8-tetrahydrofolate contacts are provided by residues Glu242 and 350–352; that span reads SPF.

Belongs to the SHMT family. Homodimer. The cofactor is pyridoxal 5'-phosphate.

The protein localises to the cytoplasm. It catalyses the reaction (6R)-5,10-methylene-5,6,7,8-tetrahydrofolate + glycine + H2O = (6S)-5,6,7,8-tetrahydrofolate + L-serine. The protein operates within one-carbon metabolism; tetrahydrofolate interconversion. It participates in amino-acid biosynthesis; glycine biosynthesis; glycine from L-serine: step 1/1. Its function is as follows. Catalyzes the reversible interconversion of serine and glycine with tetrahydrofolate (THF) serving as the one-carbon carrier. This reaction serves as the major source of one-carbon groups required for the biosynthesis of purines, thymidylate, methionine, and other important biomolecules. Also exhibits THF-independent aldolase activity toward beta-hydroxyamino acids, producing glycine and aldehydes, via a retro-aldol mechanism. The protein is Serine hydroxymethyltransferase of Helicobacter acinonychis (strain Sheeba).